Consider the following 509-residue polypeptide: Maturase K (509 aa).

The protein belongs to the intron maturase 2 family. MatK subfamily.

The protein localises to the plastid. It is found in the chloroplast. Usually encoded in the trnK tRNA gene intron. Probably assists in splicing its own and other chloroplast group II introns. The chain is Maturase K from Nicotiana glutinosa (Tobacco).